A 247-amino-acid chain; its full sequence is Acidic 27 kDa endochitinase (247 aa).

Residues 1 to 16 (MVLCCVFLLFLTGSFA) form the signal peptide. Residue E84 is the Proton donor of the active site. C206 and C238 are joined by a disulfide.

It belongs to the glycosyl hydrolase 19 family. Chitinase class II subfamily.

It is found in the secreted. Its subcellular location is the extracellular space. The enzyme catalyses Random endo-hydrolysis of N-acetyl-beta-D-glucosaminide (1-&gt;4)-beta-linkages in chitin and chitodextrins.. Defense against chitin-containing fungal pathogens. The polypeptide is Acidic 27 kDa endochitinase (CHI17) (Solanum lycopersicum (Tomato)).